The chain runs to 433 residues: Phosphomethylpyrimidine synthase 2 (433 aa).

Substrate-binding positions include asparagine 66, methionine 94, tyrosine 123, histidine 162, 184-186 (SRG), 225-228 (DALR), and glutamate 264. Histidine 268 serves as a coordination point for Zn(2+). Position 291 (tyrosine 291) interacts with substrate. Histidine 332 provides a ligand contact to Zn(2+). Residues cysteine 408, cysteine 411, and cysteine 415 each contribute to the [4Fe-4S] cluster site.

This sequence belongs to the ThiC family. The cofactor is [4Fe-4S] cluster.

It catalyses the reaction 5-amino-1-(5-phospho-beta-D-ribosyl)imidazole + S-adenosyl-L-methionine = 4-amino-2-methyl-5-(phosphooxymethyl)pyrimidine + CO + 5'-deoxyadenosine + formate + L-methionine + 3 H(+). Its pathway is cofactor biosynthesis; thiamine diphosphate biosynthesis. Functionally, catalyzes the synthesis of the hydroxymethylpyrimidine phosphate (HMP-P) moiety of thiamine from aminoimidazole ribotide (AIR) in a radical S-adenosyl-L-methionine (SAM)-dependent reaction. In Saccharolobus solfataricus (strain ATCC 35092 / DSM 1617 / JCM 11322 / P2) (Sulfolobus solfataricus), this protein is Phosphomethylpyrimidine synthase 2.